We begin with the raw amino-acid sequence, 442 residues long: Putative aminohydrolase SsnA (442 aa).

Zn(2+) is bound by residues His-62, His-64, His-227, and Asp-312.

It belongs to the metallo-dependent hydrolases superfamily. ATZ/TRZ family.

This is Putative aminohydrolase SsnA (ssnA) from Escherichia coli (strain K12).